The chain runs to 113 residues: Ribonuclease P protein component (113 aa).

This sequence belongs to the RnpA family. Consists of a catalytic RNA component (M1 or rnpB) and a protein subunit.

It catalyses the reaction Endonucleolytic cleavage of RNA, removing 5'-extranucleotides from tRNA precursor.. Functionally, RNaseP catalyzes the removal of the 5'-leader sequence from pre-tRNA to produce the mature 5'-terminus. It can also cleave other RNA substrates such as 4.5S RNA. The protein component plays an auxiliary but essential role in vivo by binding to the 5'-leader sequence and broadening the substrate specificity of the ribozyme. This is Ribonuclease P protein component from Finegoldia magna (strain ATCC 29328 / DSM 20472 / WAL 2508) (Peptostreptococcus magnus).